A 119-amino-acid chain; its full sequence is MLYTGTDIIEIRRIKAAEARWGEHFLNRIFTPAELSLCKDRFPSLAARFAAKEAVIKVLSLPKNQSYTEIETLNLPEGQPSVNLYGQARDKANILGIKHLSISLSHCREYAIAMVVAQD.

2 residues coordinate Mg(2+): Asp7 and Glu53.

Belongs to the P-Pant transferase superfamily. AcpS family. It depends on Mg(2+) as a cofactor.

The protein resides in the cytoplasm. It catalyses the reaction apo-[ACP] + CoA = holo-[ACP] + adenosine 3',5'-bisphosphate + H(+). Transfers the 4'-phosphopantetheine moiety from coenzyme A to a Ser of acyl-carrier-protein. This chain is Holo-[acyl-carrier-protein] synthase, found in Dehalococcoides mccartyi (strain CBDB1).